The following is a 356-amino-acid chain: Chorismate synthase (356 aa).

Residues R48 and R54 each coordinate NADP(+). Residues 125–127, 237–238, G282, 297–301, and R323 contribute to the FMN site; these read RSS, NA, and KPTSS.

It belongs to the chorismate synthase family. As to quaternary structure, homotetramer. The cofactor is FMNH2.

The catalysed reaction is 5-O-(1-carboxyvinyl)-3-phosphoshikimate = chorismate + phosphate. It functions in the pathway metabolic intermediate biosynthesis; chorismate biosynthesis; chorismate from D-erythrose 4-phosphate and phosphoenolpyruvate: step 7/7. Functionally, catalyzes the anti-1,4-elimination of the C-3 phosphate and the C-6 proR hydrogen from 5-enolpyruvylshikimate-3-phosphate (EPSP) to yield chorismate, which is the branch point compound that serves as the starting substrate for the three terminal pathways of aromatic amino acid biosynthesis. This reaction introduces a second double bond into the aromatic ring system. The chain is Chorismate synthase from Rhizorhabdus wittichii (strain DSM 6014 / CCUG 31198 / JCM 15750 / NBRC 105917 / EY 4224 / RW1) (Sphingomonas wittichii).